Reading from the N-terminus, the 115-residue chain is Large ribosomal subunit protein bL19 (115 aa).

Belongs to the bacterial ribosomal protein bL19 family.

This protein is located at the 30S-50S ribosomal subunit interface and may play a role in the structure and function of the aminoacyl-tRNA binding site. The sequence is that of Large ribosomal subunit protein bL19 from Erwinia tasmaniensis (strain DSM 17950 / CFBP 7177 / CIP 109463 / NCPPB 4357 / Et1/99).